A 384-amino-acid chain; its full sequence is Alcohol dehydrogenase class-3 (384 aa).

Cysteine 48, histidine 70, cysteine 100, cysteine 103, cysteine 106, cysteine 114, and cysteine 177 together coordinate Zn(2+).

The protein belongs to the zinc-containing alcohol dehydrogenase family. Class-III subfamily. As to quaternary structure, homodimer. Requires Zn(2+) as cofactor.

The protein resides in the cytoplasm. It carries out the reaction a primary alcohol + NAD(+) = an aldehyde + NADH + H(+). It catalyses the reaction a secondary alcohol + NAD(+) = a ketone + NADH + H(+). The enzyme catalyses S-(hydroxymethyl)glutathione + NADP(+) = S-formylglutathione + NADPH + H(+). The catalysed reaction is S-(hydroxymethyl)glutathione + NAD(+) = S-formylglutathione + NADH + H(+). Functionally, class-III ADH is remarkably ineffective in oxidizing ethanol, but it readily catalyzes the oxidation of long-chain primary alcohols and the oxidation of S-(hydroxymethyl) glutathione. Plays a role in the calcium flux to the cytoplasm in the ASJ sensory neurons upon removal of a nitric oxide stimulus. The protein is Alcohol dehydrogenase class-3 of Caenorhabditis elegans.